The chain runs to 205 residues: Small ribosomal subunit protein uS4 (205 aa).

Basic and acidic residues predominate over residues 1-16 (MSKRESSKYKIDRRMG). A disordered region spans residues 1–46 (MSKRESSKYKIDRRMGENIWGRPKSPVNRREYGPGQHGQRRKGKLS). An S4 RNA-binding domain is found at 94-157 (SRLDAIVYRA…KQLVTVLEAV (64 aa)).

The protein belongs to the universal ribosomal protein uS4 family. In terms of assembly, part of the 30S ribosomal subunit. Contacts protein S5. The interaction surface between S4 and S5 is involved in control of translational fidelity.

Its function is as follows. One of the primary rRNA binding proteins, it binds directly to 16S rRNA where it nucleates assembly of the body of the 30S subunit. Functionally, with S5 and S12 plays an important role in translational accuracy. The protein is Small ribosomal subunit protein uS4 of Rhizobium etli (strain CIAT 652).